Consider the following 132-residue polypeptide: Protein NrdI (132 aa).

Belongs to the NrdI family.

Probably involved in ribonucleotide reductase function. In Staphylococcus aureus (strain Mu3 / ATCC 700698), this protein is Protein NrdI.